The following is a 253-amino-acid chain: Sulfur carrier protein FdhD (253 aa).

The active-site Cysteine persulfide intermediate is the Cys-100.

This sequence belongs to the FdhD family.

It localises to the cytoplasm. Its function is as follows. Required for formate dehydrogenase (FDH) activity. Acts as a sulfur carrier protein that transfers sulfur from IscS to the molybdenum cofactor prior to its insertion into FDH. In Sulfolobus acidocaldarius (strain ATCC 33909 / DSM 639 / JCM 8929 / NBRC 15157 / NCIMB 11770), this protein is Sulfur carrier protein FdhD.